A 264-amino-acid chain; its full sequence is Thymidylate synthase (264 aa).

Arg21 provides a ligand contact to dUMP. His51 contributes to the (6R)-5,10-methylene-5,6,7,8-tetrahydrofolate binding site. Residue 126 to 127 coordinates dUMP; that stretch reads RR. Cys146 serves as the catalytic Nucleophile. DUMP contacts are provided by residues 166–169, Asn177, and 207–209; these read RSAD and HLY. Asp169 lines the (6R)-5,10-methylene-5,6,7,8-tetrahydrofolate pocket. Residue Ser263 participates in (6R)-5,10-methylene-5,6,7,8-tetrahydrofolate binding.

This sequence belongs to the thymidylate synthase family. Bacterial-type ThyA subfamily. As to quaternary structure, homodimer.

The protein resides in the cytoplasm. The enzyme catalyses dUMP + (6R)-5,10-methylene-5,6,7,8-tetrahydrofolate = 7,8-dihydrofolate + dTMP. It participates in pyrimidine metabolism; dTTP biosynthesis. Its function is as follows. Catalyzes the reductive methylation of 2'-deoxyuridine-5'-monophosphate (dUMP) to 2'-deoxythymidine-5'-monophosphate (dTMP) while utilizing 5,10-methylenetetrahydrofolate (mTHF) as the methyl donor and reductant in the reaction, yielding dihydrofolate (DHF) as a by-product. This enzymatic reaction provides an intracellular de novo source of dTMP, an essential precursor for DNA biosynthesis. This is Thymidylate synthase from Neisseria gonorrhoeae (strain ATCC 700825 / FA 1090).